We begin with the raw amino-acid sequence, 424 residues long: Glutamate-1-semialdehyde 2,1-aminomutase (424 aa).

At lysine 266 the chain carries N6-(pyridoxal phosphate)lysine.

This sequence belongs to the class-III pyridoxal-phosphate-dependent aminotransferase family. HemL subfamily. Homodimer. It depends on pyridoxal 5'-phosphate as a cofactor.

The protein resides in the cytoplasm. It catalyses the reaction (S)-4-amino-5-oxopentanoate = 5-aminolevulinate. It functions in the pathway porphyrin-containing compound metabolism; protoporphyrin-IX biosynthesis; 5-aminolevulinate from L-glutamyl-tRNA(Glu): step 2/2. The sequence is that of Glutamate-1-semialdehyde 2,1-aminomutase from Thermus thermophilus (strain ATCC 27634 / DSM 579 / HB8).